The following is a 651-amino-acid chain: Histone-lysine N-methyltransferase family member SUVH2 (651 aa).

Residues 1–28 are disordered; that stretch reads MSTLLPFPDLNLMPDSQSSTAGTTAGDT. Residues 15–28 are compositionally biased toward low complexity; that stretch reads DSQSSTAGTTAGDT. The YDG domain occupies 202 to 358; sequence DKHIVGPVTG…KFRLVRIEGQ (157 aa). Residues 434-492 form the Pre-SET domain; sequence TGCECKLSCTDDCLCARKNGGEFAYDDNGHLLKGKHVVFECGEFCTCGPSCKSRVTQKG. The Zn(2+) site is built by cysteine 436, cysteine 438, cysteine 442, cysteine 446, cysteine 448, cysteine 474, cysteine 478, cysteine 480, and cysteine 484. An SET domain is found at 495 to 638; the sequence is NRLEVFRSKE…PLAELSLDYG (144 aa).

The protein belongs to the class V-like SAM-binding methyltransferase superfamily. Histone-lysine methyltransferase family. Suvar3-9 subfamily. As to quaternary structure, self-interacts. Interacts with DNA-directed RNA polymerase V subunit NRPE1 and with DRD1 and DMS3. Binds to MORC1/CRT1. Expressed at low levels in leaves stems and flowers.

It is found in the nucleus. Its subcellular location is the chromosome. The protein localises to the centromere. Its function is as follows. Histone methyltransferase family member that plays a central role in gene silencing. Together with MORC6 and SUVH9, regulates the silencing of some transposable elements (TEs). According to PubMed:15775980, it is required for normal methylation of 'Lys-9' and 'Lys-27' of histone H3, 'Lys-20' of H4, and cytosine, but PubMed:19043555 see no significant effect on histone methylation when the gene is mutated. According to PubMed:19043555, the protein does not bind S-adenosyl-L-methionine and lacks methyltransferase activity. Instead, it may function downstream of DRM2 in RNA-directed DNA methylation, binding to methylated DNA and recruiting DNA-directed RNA polymerase V to chromatin. The chain is Histone-lysine N-methyltransferase family member SUVH2 (SUVH2) from Arabidopsis thaliana (Mouse-ear cress).